The chain runs to 591 residues: MDDLDALLADLESTTSHISKRPVFLSEETPYSYPTGNHTYQEIAVPPPVPPPPSSEALNGTILDPLDQWQPSGSRFIHQQPQSSSPVYGSSAKTSSVSNPQDGVGSPCSRVGEEEHVYSFPNKQKSAESSPTVMSTSLGSNLSELDRLLLELNAVQHNPPGFPADEANSGPPLPGALSPHYGVPETNSPLGGKAGPLTKEKPKRNGGRGLEDVRPSVESLLDELESSVPSPVPAITVNQGEMSSPQRVTSTQQQTRISASSATRELDELMASLSDFRIQGLEQRADGERCWAADWPRDGGRSSPGGQDEGGFMAQGKTGSSSPPGGPPKPGSQLDSMLGSLQSDLNKLGVATVAKGVCGACKKPIAGQVVTAMGKTWHPEHFVCTHCQEEIGSRNFFERDGQPYCEKDYHNLFSPRCYYCNGPILDKVVTALDRTWHPEHFFCAQCGAFFGPEGFHEKDGKAYCRKDYFDMFAPKCGGCARAILENYISALNTLWHPECFVCRECFTPFVNGSFFEHDGQPYCEVHYHERRGSLCSGCQKPITGRCITAMAKKFHPEHFVCAFCLKQLNKGTFKEQNDKPYCQNCFLKLFC.

N-acetylmethionine is present on Met-1. Residues Asp-3–Thr-15 carry the LD motif 1 motif. The disordered stretch occupies residues His-17 to Leu-138. A Phosphotyrosine; by PTK6 modification is found at Tyr-31. Over residues Val-45–Ser-54 the composition is skewed to pro residues. Residues Trp-69–Gln-101 are compositionally biased toward polar residues. A phosphoserine mark is found at Ser-83 and Ser-85. Phosphotyrosine is present on Tyr-88. Ser-106 is modified (phosphoserine). Tyr-118 is subject to Phosphotyrosine; by PTK6. Residues Ser-119, Ser-126, and Ser-130 each carry the phosphoserine modification. Over residues Pro-121–Ser-137 the composition is skewed to polar residues. Residue Thr-132 is modified to Phosphothreonine. Residues Ser-137, Ser-140, and Ser-143 each carry the phosphoserine modification. An LD motif 2 motif is present at residues Glu-144–Gln-156. The interval Gln-156 to Val-213 is disordered. A Phosphotyrosine modification is found at Tyr-181. The short motif at Ser-216–Val-228 is the LD motif 3 element. Phosphoserine is present on Ser-230. The disordered stretch occupies residues Val-237–Ser-260. Residue Ser-244 is modified to Phosphoserine; by CDK5. Ser-250, Ser-258, Ser-261, and Ser-272 each carry phosphoserine. The short motif at Glu-265–Phe-276 is the LD motif 4 element. Over residues Arg-289–Gly-300 the composition is skewed to basic and acidic residues. The tract at residues Arg-289 to Asp-335 is disordered. Residues Ser-303, Ser-322, Ser-332, and Ser-340 each carry the phosphoserine modification. An LD motif 5 motif is present at residues Gln-333–Leu-345. LIM zinc-binding domains are found at residues Gly-356–Pro-415, Arg-416–Ala-473, Pro-474–Ser-533, and Leu-534–Cys-591. Ser-533 carries the post-translational modification Phosphoserine.

Belongs to the paxillin family. As to quaternary structure, binds to vinculin and to the SH3 domain of SRC. Interacts with GIT1, NUDT16L1/SDOS, PARVA, PARVB, SORBS1 and TGFB1I1. Component of cytoplasmic complexes, which also contain GIT1, ARHGEF6 and PAK1. Binds ASAP2. Interacts with RNF5 and PDCD10. Interacts with NEK3 and this interaction is prolactin-dependent. Interacts with PTK2/FAK1 and PTK2B/PYK2. Interacts with PTK6. Interacts with CD36. Interacts (via cytoplasmic domain) with CEACAM1; the interaction is phosphotyrosyl-dependent. Interacts with PXN; this complex stabilizes actin dynamics. Interacts with TRIM15. Interacts with PAK4; PAK4 acts as a scaffold to suppport PAXI phosphorylation at Ser-272. In terms of processing, phosphorylated by MAPK1/ERK2. Phosphorylated on tyrosine residues during integrin-mediated cell adhesion, embryonic development, fibroblast transformation and following stimulation of cells by mitogens. Phosphorylation at Ser-244 by CDK5 reduces its interaction with PTK2/FAK1 in matrix-cell focal adhesions (MCFA) during oligodendrocytes (OLs) differentiation. Phosphorylation at Tyr-31 and Tyr-118 by PTK6 promote the activation of RAC1 via CRK/CrKII, thereby promoting migration and invasion. Phosphorylation at Ser-250 by SLK is required for PXN redistribution and cell motility. Phosphorylation at Ser-272 promotes focal adhesion disassembly during cell migration.

It localises to the cytoplasm. It is found in the cytoskeleton. Its subcellular location is the cell junction. The protein resides in the focal adhesion. The protein localises to the cell cortex. Its function is as follows. Cytoskeletal protein involved in actin-membrane attachment at sites of cell adhesion to the extracellular matrix (focal adhesion). Recruits other proteins such as TRIM15 to focal adhesion. This Pongo abelii (Sumatran orangutan) protein is Paxillin (PXN).